Consider the following 836-residue polypeptide: V-type proton ATPase subunit C (836 aa).

Residues 116-144 (LSLRHQRKHQHTHHQNKPQHYHHHHHHHQ) are compositionally biased toward basic residues. Disordered stretches follow at residues 116-169 (LSLR…ASAP), 302-403 (APTT…SVQS), 415-453 (KPKRNSKKSSAQQQHETAQLQHQQTTQQHATPLTPQNHN), and 496-544 (PSQL…PLSP). A compositionally biased stretch (pro residues) spans 160–169 (ATPPAPASAP). Low complexity predominate over residues 302–316 (APTTSSSVHSSMSRS). 2 stretches are compositionally biased toward polar residues: residues 319 to 348 (KRLNNNTCSINNNKLSFRSGSHVSQLHLAT) and 364 to 374 (TNPLQSPVQKS). Low complexity predominate over residues 425-450 (AQQQHETAQLQHQQTTQQHATPLTPQ). A compositionally biased stretch (polar residues) spans 496-511 (PSQLNINNGFNLTPTH). Residues 512–529 (RSSPVSSCCGSSSQGRSS) show a composition bias toward low complexity.

Belongs to the V-ATPase C subunit family. As to quaternary structure, V-ATPase is a heteromultimeric enzyme made up of two complexes: the ATP-hydrolytic V1 complex and the proton translocation V0 complex. The V1 complex consists of three catalytic AB heterodimers that form a heterohexamer, three peripheral stalks each consisting of EG heterodimers, one central rotor including subunits D and F, and the regulatory subunits C and H. The proton translocation complex V0 consists of the proton transport subunit a, a ring of proteolipid subunits c9c'', rotary subunit d, subunits e and f, and the accessory subunits VhaAC45 and ATP6AP2. As to expression, in larvae, expressed in the ring gland, CNS, imaginal disks and lymph gland.

Functionally, subunit of the V1 complex of vacuolar(H+)-ATPase (V-ATPase), a multisubunit enzyme composed of a peripheral complex (V1) that hydrolyzes ATP and a membrane integral complex (V0) that translocates protons. V-ATPase is responsible for acidifying and maintaining the pH of intracellular compartments and in some cell types, is targeted to the plasma membrane, where it is responsible for acidifying the extracellular environment. Subunit C is necessary for the assembly of the catalytic sector of the enzyme and is likely to have a specific function in its catalytic activity. In enterocytes, acts as part of a pHCl-2 sensory pathway which mediates Tor-dependent larval growth and metabolism in response to zinc availability. Likely acts in maintaining enterocyte lysosomal acidification which consequently promotes Tor activation at the lysosome membrane. The chain is V-type proton ATPase subunit C (Vha44) from Drosophila melanogaster (Fruit fly).